A 49-amino-acid chain; its full sequence is Delta-actitoxin-Axm1a (49 aa).

Disulfide bonds link C4/C46, C6/C36, and C29/C47.

This sequence belongs to the sea anemone sodium channel inhibitory toxin family. Type I subfamily.

The protein resides in the secreted. It localises to the nematocyst. Functionally, binds specifically to voltage-gated sodium channels (Nav) (site 3), thereby delaying their inactivation. This toxin retains the greatest capacity to discriminate between the cardiac (Nav1.5/SCN5A) and neuronal sodium channels (2.5 nM versus 120 nM, when electrophysiologically tested and 14 nM versus 400 nM, when tested by ion flux), whereas its paralog Anthopleurin-B has the highest affinity of all anemone toxins for the mammalian sodium channel. Its ability to differentiate between cardiac and skeletal channels appears to be associated with domain 4 of the channel. This toxin does not slow or inhibit closed-state inactivation of cardiac sodium channels, but selectively modifies inactivation from the open-state. It does not display phospholipid-binding activities, suggesting that the domain IV S3-S4 linker is located at the extracellular surface and not buried in the phospholipid bilayer. The chain is Delta-actitoxin-Axm1a from Anthopleura xanthogrammica (Giant green sea anemone).